An 805-amino-acid polypeptide reads, in one-letter code: Zinc finger CCCH domain-containing protein 11B (805 aa).

C3H1-type zinc fingers lie at residues 2-29 (PNQGEDCYFFFYSTCTKGDSCPFRHCEA) and 31-57 (LGNETVCTLWQEGRCFRRVCRFRHMEI). 6 disordered regions span residues 140 to 194 (KVES…GLRV), 223 to 351 (KKMK…DKVN), 364 to 433 (MLLE…TCIK), 449 to 468 (IVASKGQSEEPAGKTKSMQE), 481 to 506 (KALRVQQSSESSTSSPSQHEATPGAR), and 715 to 805 (VTVP…PLEL). Residues 160–175 (ADDDEDDDDQFSEEGD) are compositionally biased toward acidic residues. Residues 364-390 (MLLERASQKHGESQTKLKTEGPSKTDD) are compositionally biased toward basic and acidic residues. A compositionally biased stretch (polar residues) spans 391–402 (STSGARSSSTIR). Residues 403–423 (IKTFSEVLAEEEHRQQEAERQ) adopt a coiled-coil conformation. Basic and acidic residues-rich tracts occupy residues 412–433 (EEEHRQQEAERQKSKKDTTCIK) and 455–468 (QSEEPAGKTKSMQE). Composition is skewed to low complexity over residues 486–498 (QQSSESSTSSPSQ) and 730–749 (PPTQSSSDSSPPEVSGPSSS). Residues 750 to 763 (QMSMKTRRLSSAST) show a composition bias toward polar residues. The segment covering 789–805 (EIDLDPGKDEDDLPLEL) has biased composition (acidic residues).

May play a role in mRNA transport. The protein is Zinc finger CCCH domain-containing protein 11B of Homo sapiens (Human).